A 161-amino-acid chain; its full sequence is Protein-export protein SecB (161 aa).

It belongs to the SecB family. In terms of assembly, homotetramer, a dimer of dimers. One homotetramer interacts with 1 SecA dimer.

The protein resides in the cytoplasm. Its function is as follows. One of the proteins required for the normal export of preproteins out of the cell cytoplasm. It is a molecular chaperone that binds to a subset of precursor proteins, maintaining them in a translocation-competent state. It also specifically binds to its receptor SecA. This Shewanella sp. (strain MR-7) protein is Protein-export protein SecB.